Here is a 441-residue protein sequence, read N- to C-terminus: Homogentisate 1,2-dioxygenase (441 aa).

H287 (proton acceptor) is an active-site residue. Positions 330 and 336 each coordinate Fe cation. Homogentisate is bound by residues Y345 and H366. Fe cation is bound at residue H366.

The protein belongs to the homogentisate dioxygenase family. As to quaternary structure, hexamer; dimer of trimers. It depends on Fe cation as a cofactor.

The enzyme catalyses homogentisate + O2 = 4-maleylacetoacetate + H(+). Its pathway is amino-acid degradation; L-phenylalanine degradation; acetoacetate and fumarate from L-phenylalanine: step 4/6. Its function is as follows. Involved in the catabolism of homogentisate (2,5-dihydroxyphenylacetate or 2,5-OH-PhAc), a central intermediate in the degradation of phenylalanine and tyrosine. Catalyzes the oxidative ring cleavage of the aromatic ring of homogentisate to yield maleylacetoacetate. This Xanthomonas oryzae pv. oryzae (strain MAFF 311018) protein is Homogentisate 1,2-dioxygenase.